A 202-amino-acid polypeptide reads, in one-letter code: Type II restriction enzyme MunI (202 aa).

In terms of assembly, homodimer.

It catalyses the reaction Endonucleolytic cleavage of DNA to give specific double-stranded fragments with terminal 5'-phosphates.. A P subtype restriction enzyme that recognizes the double-stranded sequence 5'-CAATTG-3' and cleaves after C-1. This chain is Type II restriction enzyme MunI, found in Mycoplasma sp.